The chain runs to 187 residues: Large ribosomal subunit protein uL5 (187 aa).

Belongs to the universal ribosomal protein uL5 family. In terms of assembly, part of the 50S ribosomal subunit; part of the 5S rRNA/L5/L18/L25 subcomplex. Contacts the 5S rRNA and the P site tRNA. Forms a bridge to the 30S subunit in the 70S ribosome.

In terms of biological role, this is one of the proteins that bind and probably mediate the attachment of the 5S RNA into the large ribosomal subunit, where it forms part of the central protuberance. In the 70S ribosome it contacts protein S13 of the 30S subunit (bridge B1b), connecting the 2 subunits; this bridge is implicated in subunit movement. Contacts the P site tRNA; the 5S rRNA and some of its associated proteins might help stabilize positioning of ribosome-bound tRNAs. The polypeptide is Large ribosomal subunit protein uL5 (Mycobacterium sp. (strain JLS)).